The primary structure comprises 511 residues: Inactive cytochrome P450 monooxygenase cloA (511 aa).

The chain crosses the membrane as a helical span at residues 17-37 (ILLTAGLCVPCALVIHGIYNL). Residues Asn-81 and Asn-344 are each glycosylated (N-linked (GlcNAc...) asparagine). Cys-450 contributes to the heme binding site.

The protein belongs to the cytochrome P450 family. It depends on heme as a cofactor.

The protein localises to the membrane. In terms of biological role, inactive cytochrome P450 monooxygenase; part of the gene cluster that mediates the biosynthesis of fungal ergot alkaloid. DmaW catalyzes the first step of ergot alkaloid biosynthesis by condensing dimethylallyl diphosphate (DMAP) and tryptophan to form 4-dimethylallyl-L-tryptophan. The second step is catalyzed by the methyltransferase easF that methylates 4-dimethylallyl-L-tryptophan in the presence of S-adenosyl-L-methionine, resulting in the formation of 4-dimethylallyl-L-abrine. The catalase easC and the FAD-dependent oxidoreductase easE then transform 4-dimethylallyl-L-abrine to chanoclavine-I which is further oxidized by easD in the presence of NAD(+), resulting in the formation of chanoclavine-I aldehyde. Agroclavine dehydrogenase easG then mediates the conversion of chanoclavine-I aldehyde to agroclavine via a non-enzymatic adduct reaction: the substrate is an iminium intermediate that is formed spontaneously from chanoclavine-I aldehyde in the presence of glutathione. Further conversion of agroclavine to paspalic acid is a two-step process involving oxidation of agroclavine to elymoclavine and of elymoclavine to paspalic acid, the second step being performed by the elymoclavine oxidase cloA. However, cloA does not encode a functional enzyme indicating that C.fusiformis terminates its ergot alkaloid pathway at elymoclavine. The polypeptide is Inactive cytochrome P450 monooxygenase cloA (Claviceps fusiformis (Ergot fungus)).